We begin with the raw amino-acid sequence, 183 residues long: Hypoxanthine-guanine phosphoribosyltransferase (183 aa).

The diphosphate site is built by Arg47 and Gly48. Residues Glu103 and Asp104 each contribute to the Mg(2+) site. Asp107 functions as the Proton acceptor in the catalytic mechanism. Residues Lys134, 155–156 (FV), and Asp162 each bind GMP. Arg168 contributes to the diphosphate binding site.

The protein belongs to the purine/pyrimidine phosphoribosyltransferase family. Mg(2+) is required as a cofactor.

It localises to the cytoplasm. It carries out the reaction IMP + diphosphate = hypoxanthine + 5-phospho-alpha-D-ribose 1-diphosphate. The catalysed reaction is GMP + diphosphate = guanine + 5-phospho-alpha-D-ribose 1-diphosphate. It participates in purine metabolism; IMP biosynthesis via salvage pathway; IMP from hypoxanthine: step 1/1. It functions in the pathway purine metabolism; GMP biosynthesis via salvage pathway; GMP from guanine: step 1/1. Purine salvage pathway enzyme that catalyzes the transfer of the ribosyl-5-phosphate group from 5-phospho-alpha-D-ribose 1-diphosphate (PRPP) to the N9 position of the 6-oxopurines hypoxanthine and guanine to form the corresponding ribonucleotides IMP (inosine 5'-monophosphate) and GMP (guanosine 5'-monophosphate), with the release of PPi. This chain is Hypoxanthine-guanine phosphoribosyltransferase (hpt), found in Lactococcus lactis subsp. lactis (strain IL1403) (Streptococcus lactis).